A 365-amino-acid polypeptide reads, in one-letter code: Green-sensitive opsin P521 (365 aa).

At 1–51 the chain is on the extracellular side; the sequence is MTEAWNVAVFAARRSRDDDDTTRGSVFTYTNTNNTRGPFEGPNYHIAPRWV. Asparagine 33 carries N-linked (GlcNAc...) asparagine glycosylation. A helical transmembrane segment spans residues 52-76; sequence YNLVSFFMIIVVIASCFTNGLVLVA. The Cytoplasmic segment spans residues 77–88; it reads TAKFKKLRHPLN. The chain crosses the membrane as a helical span at residues 89–113; that stretch reads WILVNLAFVDLVETLVASTISVFNQ. Over 114-128 the chain is Extracellular; that stretch reads IFGYFILGHPLCVIE. Cysteine 125 and cysteine 202 are oxidised to a cystine. A helical transmembrane segment spans residues 129-148; sequence GYVVSSCGITGLWSLAIISW. Residues 149–167 lie on the Cytoplasmic side of the membrane; it reads ERWFVVCKPFGNIKFDSKL. A helical membrane pass occupies residues 168 to 191; sequence AIIGIVFSWVWAWGWSAPPIFGWS. Residues 192 to 217 are Extracellular-facing; sequence RYWPHGLKTSCGPDVFSGSVELGCQS. The chain crosses the membrane as a helical span at residues 218–245; it reads FMLTLMITCCFLPLFIIIVCYLQVWMAI. Over 246-267 the chain is Cytoplasmic; the sequence is RAVAAQQKESESTQKAEREVSR. The helical transmembrane segment at 268–291 threads the bilayer; it reads MVVVMIVAFCICWGPYASFVSFAA. The Extracellular segment spans residues 292 to 299; sequence ANPGYAFH. A helical transmembrane segment spans residues 300–324; the sequence is PLAAALPAYFAKSATIYNPVIYVFM. An N6-(retinylidene)lysine modification is found at lysine 311. Topologically, residues 325-365 are cytoplasmic; that stretch reads NRQFRNCIMQLFGKKVDDGSEASTTSRTEVSSVSNSSVAPA. Residues 342–365 form a disordered region; sequence DGSEASTTSRTEVSSVSNSSVAPA. Residues 345-365 are compositionally biased toward low complexity; the sequence is EASTTSRTEVSSVSNSSVAPA.

The protein belongs to the G-protein coupled receptor 1 family. Opsin subfamily. Post-translationally, phosphorylated on some or all of the serine and threonine residues present in the C-terminal region. As to expression, in this lizard the color pigments are found in the rod-shaped photoreceptor cells which have been derived from ancestral cone-like photoreceptors.

The protein resides in the membrane. Its function is as follows. Visual pigments are the light-absorbing molecules that mediate vision. They consist of an apoprotein, opsin, covalently linked to cis-retinal. The chain is Green-sensitive opsin P521 from Gekko gecko (Tokay gecko).